The following is a 352-amino-acid chain: Trifunctional sesterterpene/triterpene/sesquarterpene synthase (352 aa).

It belongs to the large terpene synthase family.

The enzyme catalyses (2E,6E,10E,14E)-geranylfarnesyl diphosphate = beta-geranylfarnesene + diphosphate. The catalysed reaction is all-trans-hexaprenyl diphosphate = beta-hexaprene + diphosphate. It catalyses the reaction all-trans-heptaprenyl diphosphate = beta-heptaprene + diphosphate. Catalyzes the conversion of geranylfarnesyl diphosphate (GFPP) and hexaprenyl diphosphate (HexPP) into beta-geranylfarnesene and beta-hexaprene, respectively. Also produces beta-heptaprene from heptaprenyl diphosphate (HepPP) as a minor product. The protein is Trifunctional sesterterpene/triterpene/sesquarterpene synthase of Shouchella clausii (Alkalihalobacillus clausii).